We begin with the raw amino-acid sequence, 594 residues long: TOX high mobility group box family member 4-B (594 aa).

Disordered regions lie at residues 160-225 (GTIL…PQKP) and 522-545 (ESPP…SPQC). The span at 207 to 217 (KPKTPKKKKKK) shows a compositional bias: basic residues. A Nuclear localization signal motif is present at residues 212-217 (KKKKKK). A DNA-binding region (HMG box) is located at residues 222–290 (PQKPLSAYAL…EYLKALALYK (69 aa)).

In terms of assembly, component of the PNUTS-PP1 phosphatase complex.

It localises to the nucleus. The protein resides in the chromosome. Functionally, transcription factor that modulates cell fate reprogramming from the somatic state to the pluripotent and neuronal fate. Also acts as a regulatory component of protein phosphatase 1 (PP1) complexes. Component of the PNUTS-PP1 protein phosphatase complex, a PP1 complex that regulates RNA polymerase II transcription pause-release. PNUTS-PP1 also plays a role in the control of chromatin structure and cell cycle progression during the transition from mitosis into interphase. This chain is TOX high mobility group box family member 4-B (tox4-b), found in Xenopus laevis (African clawed frog).